A 638-amino-acid chain; its full sequence is Broad-specificity ulvan lyase (638 aa).

The N-terminal stretch at 1–27 (MKRRNFIQLSSLATIGMSLPSAGIVNA) is a signal peptide.

This sequence belongs to the polysaccharide lyase 37 family.

The protein localises to the periplasm. It carries out the reaction Endolytic cleavage of (1-&gt;4)-beta-galactosaminic bonds between N-acetylgalactosamine and either D-glucuronic acid or L-iduronic acid to produce a mixture of Delta(4)-unsaturated oligosaccharides of different sizes that are ultimately degraded to Delta(4)-unsaturated tetra- and disaccharides.. It catalyses the reaction Elimination of sulfate, appears to act on linkages between N-acetyl-D-glucosamine and uronate. Product is an unsaturated sugar.. Its function is as follows. Broad-specificity lyase involved in ulvan degradation. Ulvan is the main polysaccharide component of the Ulvales (green seaweed) cell wall. It is composed of disaccharide building blocks comprising 3-sulfated rhamnose (Rha3S) linked to D-glucuronic acid (GlcA), L-iduronic acid (IduA), or D-xylose (Xyl). Ulvan lyase catalyzes the endolytic cleavage of the glycosidic bond between Rha3S and the uronic acids GlcA or IduA, producing oligosaccharides that have unsaturated 4-deoxy-L-threo-hex-4-enopyranosiduronic acid (deltaUA) at the non-reducing end. This results eventually in the degradation of the ulvan polysaccharide into deltaUA-Rha3S disaccharides and deltaUA-Rha3S-Xyl-Rha3S tetrasaccharides. It is also able to degrade the glycosaminoglycans heparan sulfate and chondroitin sulfate. Not active against pectin, xanthan or alginate. The sequence is that of Broad-specificity ulvan lyase from Formosa agariphila (strain DSM 15362 / KCTC 12365 / LMG 23005 / KMM 3901 / M-2Alg 35-1).